The following is a 101-amino-acid chain: uncharacterized protein (101 aa).

Positions Met1–Thr18 are cleaved as a signal peptide. The chain crosses the membrane as a helical span at residues Phe62 to Phe82.

It localises to the membrane. This is an uncharacterized protein from Saccharomyces cerevisiae (strain ATCC 204508 / S288c) (Baker's yeast).